The following is a 589-amino-acid chain: Sphingosine-1-phosphate lyase (589 aa).

Residues M1–D58 lie on the Lumenal side of the membrane. An N-linked (GlcNAc...) asparagine glycan is attached at N6. A helical transmembrane segment spans residues Y59 to L76. At K77–K589 the chain is on the cytoplasmic side. K380 is modified (N6-(pyridoxal phosphate)lysine).

It belongs to the group II decarboxylase family. Sphingosine-1-phosphate lyase subfamily. In terms of assembly, homodimer. The cofactor is pyridoxal 5'-phosphate. Glycosylated.

It localises to the endoplasmic reticulum membrane. It carries out the reaction sphinganine 1-phosphate = hexadecanal + phosphoethanolamine. The catalysed reaction is (4R)-hydroxysphinganine 1-phosphate = (2R)-hydroxyhexadecanal + phosphoethanolamine. It participates in lipid metabolism; sphingolipid metabolism. In terms of biological role, sphingosine-1-phosphate lyase that cleaves phosphorylated sphingoid bases (PSBs), such as sphingosine-1-phosphate, into fatty aldehydes and phosphoethanolamine. Prefers C-16 dihydrosphingosine-l-phosphate (DHS-P) as a substrate. Regulates intracellular levels of sphingolipid long-chain base phosphates (LCBPs). Plays a role in the regulation of global responses to nutrient deprivation in yeast. This is Sphingosine-1-phosphate lyase from Saccharomyces cerevisiae (strain ATCC 204508 / S288c) (Baker's yeast).